We begin with the raw amino-acid sequence, 626 residues long: Ankyrin repeat domain-containing protein 13B (626 aa).

Residue Met-1 is modified to N-acetylmethionine. ANK repeat units lie at residues 47-76 and 80-109; these read RGRTPLHLATTLGHLECARVLLAHGADVGR and SGWTVLQEAVSTRDLELVQLVLRYRDYQRV. A disordered region spans residues 442–474; sequence PVPSVRGSPSSETPSPGSDSSSVSSSSSTTSCR. Residues 449–472 are compositionally biased toward low complexity; that stretch reads SPSSETPSPGSDSSSVSSSSSTTS. Positions 503–522 constitute a UIM 1 domain; sequence DDDDLLQFAIQQSLLEAGSE. 2 disordered regions span residues 534 to 590 and 595 to 614; these read NSKP…DEQL and ELSAQEQEERRRRARQEEEE. Over residues 554-573 the composition is skewed to pro residues; sequence PPTPQRQPAPPASVPSPRPS. UIM domains lie at 585-604 and 610-626; these read SYDEQLRLAMELSAQEQEER and QEEEELERILRLSLTEQ.

As to quaternary structure, interacts with EGFR (ubiquitinated); the interaction is direct and may regulate EGFR internalization.

Its subcellular location is the cell membrane. It localises to the late endosome. The protein resides in the early endosome. In terms of biological role, ubiquitin-binding protein that specifically recognizes and binds 'Lys-63'-linked ubiquitin. Does not bind 'Lys-48'-linked ubiquitin. Positively regulates the internalization of ligand-activated EGFR by binding to the Ub moiety of ubiquitinated EGFR at the cell membrane. The chain is Ankyrin repeat domain-containing protein 13B (ANKRD13B) from Homo sapiens (Human).